The following is a 325-amino-acid chain: Diacylglycerol acyltransferase/mycolyltransferase Ag85B (325 aa).

The first 40 residues, 1-40, serve as a signal peptide directing secretion; it reads MTDVSRKIRAWGRRLMIGTAAAVVLPGLVGLAGGAATAGA. 82–83 contributes to the substrate binding site; sequence LR. The tract at residues 98-108 is fibronectin-binding; that stretch reads FEWYYQSGLSI. An intrachain disulfide couples cysteine 127 to cysteine 132. Positions 166 and 194 each coordinate substrate. Residue serine 166 is the Nucleophile of the active site. The active site involves glutamate 270. Substrate-binding positions include 272 to 275, lysine 279, and 302 to 304; these read FVRS and HSW. Histidine 302 is a catalytic residue.

Belongs to the mycobacterial A85 antigen family.

The protein localises to the secreted. The enzyme catalyses 2 alpha,alpha'-trehalose 6-mycolate = alpha,alpha'-trehalose 6,6'-bismycolate + alpha,alpha-trehalose. It carries out the reaction an acyl-CoA + a 1,2-diacyl-sn-glycerol = a triacyl-sn-glycerol + CoA. Its function is as follows. The antigen 85 proteins (FbpA, FbpB, FbpC) are responsible for the high affinity of mycobacteria for fibronectin, a large adhesive glycoprotein, which facilitates the attachment of Mycobacteria to murine alveolar macrophages (AMs). They also help to maintain the integrity of the cell wall by catalyzing the transfer of mycolic acids to cell wall arabinogalactan and through the synthesis of alpha,alpha-trehalose dimycolate (TDM, cord factor). They catalyze the transfer of a mycoloyl residue from one molecule of alpha,alpha-trehalose monomycolate (TMM) to another TMM, leading to the formation of TDM. In Mycobacterium bovis (strain BCG / Pasteur 1173P2), this protein is Diacylglycerol acyltransferase/mycolyltransferase Ag85B (fbpB).